The sequence spans 230 residues: Ribosomal RNA large subunit methyltransferase E (230 aa).

S-adenosyl-L-methionine-binding residues include glycine 76, tryptophan 78, aspartate 99, aspartate 115, and aspartate 139. Catalysis depends on lysine 179, which acts as the Proton acceptor.

This sequence belongs to the class I-like SAM-binding methyltransferase superfamily. RNA methyltransferase RlmE family.

The protein resides in the cytoplasm. The catalysed reaction is uridine(2552) in 23S rRNA + S-adenosyl-L-methionine = 2'-O-methyluridine(2552) in 23S rRNA + S-adenosyl-L-homocysteine + H(+). In terms of biological role, specifically methylates the uridine in position 2552 of 23S rRNA at the 2'-O position of the ribose in the fully assembled 50S ribosomal subunit. The protein is Ribosomal RNA large subunit methyltransferase E of Nitrobacter winogradskyi (strain ATCC 25391 / DSM 10237 / CIP 104748 / NCIMB 11846 / Nb-255).